Consider the following 403-residue polypeptide: Prostaglandin E2 receptor EP1 subtype (403 aa).

Residues 1-38 lie on the Extracellular side of the membrane; the sequence is MSLCGPLNLSLAGEATPCAEPGAPNASAWPPSGRASAS. 2 N-linked (GlcNAc...) asparagine glycosylation sites follow: Asn8 and Asn25. A helical membrane pass occupies residues 39–65; that stretch reads PALPIFSMTLGAVSNVLALALLAQAAG. The Cytoplasmic segment spans residues 66 to 75; sequence RLRRRRSAAT. Residues 76-99 traverse the membrane as a helical segment; the sequence is FLLFVASLLATDLAGHVIPGALVL. Topologically, residues 100 to 114 are extracellular; it reads RLYAAGRSPAGGACH. Residues Cys113 and Cys191 are joined by a disulfide bond. Residues 115-136 traverse the membrane as a helical segment; the sequence is FLGGCMVFFGLCPLLLGCGMAV. Topologically, residues 137-158 are cytoplasmic; the sequence is ERCVGVTRPLLHAARVSAARAR. Residues 159 to 180 form a helical membrane-spanning segment; that stretch reads LALAVLAALALAVALLPLARVG. Over 181–204 the chain is Extracellular; sequence RYELQYPGTWCFIGLRPAGGWRQA. The chain crosses the membrane as a helical span at residues 205-230; it reads LLAGLFAGLGLAALLAALVCNTLSGL. The Cytoplasmic segment spans residues 231–295; that stretch reads ALLRARWRRR…ARRARAHDVE (65 aa). Positions 243-287 are disordered; it reads RRRPQACGPDGRRHWGARAPRSASASSSSSVASVPGGSPGRGSAR. Positions 259 to 278 are enriched in low complexity; it reads ARAPRSASASSSSSVASVPG. Residues 296-322 form a helical membrane-spanning segment; the sequence is MVGQLVGIMVVSCICWSPLLVLVVLAV. The Extracellular segment spans residues 323–333; it reads GGWGSSSLQRP. A helical transmembrane segment spans residues 334–355; sequence LFLAVRLASWNQILDPWVYILL. Topologically, residues 356-403 are cytoplasmic; the sequence is RQAVLRQLLRLLPPRPGAKGSPAGLALTRSAWEASSLRSSRHSSLSHL.

It belongs to the G-protein coupled receptor 1 family.

It is found in the cell membrane. Its function is as follows. Receptor for prostaglandin E2 (PGE2). The activity of this receptor is mediated by G(q) proteins which activate a phosphatidylinositol-calcium second messenger system. May play a role as an important modulator of renal function. Implicated the smooth muscle contractile response to PGE2 in various tissues. The polypeptide is Prostaglandin E2 receptor EP1 subtype (PTGER1) (Canis lupus familiaris (Dog)).